The sequence spans 306 residues: HORMA domain-containing protein 2 (306 aa).

The region spanning 29 to 232 (HESLVVVKKL…SGFHSMKVKV (204 aa)) is the HORMA domain. S271 carries the phosphoserine modification.

In terms of assembly, interacts with HORMAD1. Post-translationally, phosphorylated in a SPO11-dependent manner. As to expression, specifically expressed in meiotic germ cells.

It localises to the nucleus. The protein resides in the chromosome. Its function is as follows. Essential for synapsis surveillance during meiotic prophase via the recruitment of ATR activity. Plays a key role in the male mid-pachytene checkpoint and the female meiotic prophase checkpoint: required for efficient build-up of ATR activity on unsynapsed chromosome regions, a process believed to form the basis of meiotic silencing of unsynapsed chromatin (MSUC) and meiotic prophase quality control in both sexes. Required for the DNA double-strand break-independent, BRCA1-dependent activation of ATR on the sex chromosomes that is essential for normal sex body formation. The sequence is that of HORMA domain-containing protein 2 (Hormad2) from Mus musculus (Mouse).